Here is a 119-residue protein sequence, read N- to C-terminus: Large ribosomal subunit protein uL18 (119 aa).

The tract at residues 1-23 (MISKPDKNKTRQRRHARVRGKIS) is disordered. Basic residues predominate over residues 10 to 20 (TRQRRHARVRG).

It belongs to the universal ribosomal protein uL18 family. Part of the 50S ribosomal subunit; part of the 5S rRNA/L5/L18/L25 subcomplex. Contacts the 5S and 23S rRNAs.

Its function is as follows. This is one of the proteins that bind and probably mediate the attachment of the 5S RNA into the large ribosomal subunit, where it forms part of the central protuberance. The sequence is that of Large ribosomal subunit protein uL18 from Lacticaseibacillus casei (strain BL23) (Lactobacillus casei).